We begin with the raw amino-acid sequence, 96 residues long: UPF0235 protein Pfl01_5322 (96 aa).

Belongs to the UPF0235 family.

The chain is UPF0235 protein Pfl01_5322 from Pseudomonas fluorescens (strain Pf0-1).